The chain runs to 429 residues: 3-phosphoshikimate 1-carboxyvinyltransferase (429 aa).

Residues lysine 20, serine 21, and arginine 25 each contribute to the 3-phosphoshikimate site. Lysine 20 contacts phosphoenolpyruvate. 2 residues coordinate phosphoenolpyruvate: glycine 89 and arginine 118. 3-phosphoshikimate-binding residues include serine 164, serine 165, glutamine 166, serine 192, aspartate 311, and lysine 338. Position 166 (glutamine 166) interacts with phosphoenolpyruvate. Aspartate 311 functions as the Proton acceptor in the catalytic mechanism. Phosphoenolpyruvate is bound by residues arginine 342 and arginine 384.

It belongs to the EPSP synthase family. Monomer.

Its subcellular location is the cytoplasm. It catalyses the reaction 3-phosphoshikimate + phosphoenolpyruvate = 5-O-(1-carboxyvinyl)-3-phosphoshikimate + phosphate. It functions in the pathway metabolic intermediate biosynthesis; chorismate biosynthesis. Catalyzes the transfer of the enolpyruvyl moiety of phosphoenolpyruvate (PEP) to the 5-hydroxyl of shikimate-3-phosphate (S3P) to produce enolpyruvyl shikimate-3-phosphate and inorganic phosphate. The protein is 3-phosphoshikimate 1-carboxyvinyltransferase of Methanococcus maripaludis (strain DSM 14266 / JCM 13030 / NBRC 101832 / S2 / LL).